Here is a 21-residue protein sequence, read N- to C-terminus: Protein YmjD (21 aa).

In Escherichia coli (strain K12), this protein is Protein YmjD (ymjD).